A 2483-amino-acid polypeptide reads, in one-letter code: Cation-independent mannose-6-phosphate receptor (2483 aa).

A signal peptide spans 1 to 35 (MRAVQLGPVPSGPRVALLPPLLLLLLLAAAGSAQA). The Lumenal segment spans residues 36-2295 (QAVDLDALCS…YKGLSERSQA (2260 aa)). MRH domains follow at residues 42 to 158 (ALCS…ACKK), 167 to 315 (VPCY…ACHR), 321 to 463 (ESCS…ACIK), 468 to 613 (LLCG…ACVL), 619 to 755 (ENCT…ACPE), 758 to 917 (LECM…ACPI), 925 to 1072 (QACS…ACTP), 1075 to 1212 (VDCQ…ACPV), and 1218 to 1356 (DNCQ…ACPP). Intrachain disulfides connect Cys44–Cys64 and Cys72–Cys79. A glycan (N-linked (GlcNAc...) asparagine) is linked at Asn107. Intrachain disulfides connect Cys112–Cys144, Cys129–Cys156, Cys169–Cys207, Cys223–Cys230, Cys270–Cys301, Cys283–Cys313, Cys323–Cys361, and Cys369–Cys377. N-linked (GlcNAc...) asparagine glycosylation is found at Asn395 and Asn430. 4 cysteine pairs are disulfide-bonded: Cys415–Cys449, Cys429–Cys461, Cys470–Cys513, and Cys525–Cys532. 2 N-linked (GlcNAc...) asparagine glycosylation sites follow: Asn537 and Asn575. 2 disulfides stabilise this stretch: Cys566–Cys599 and Cys580–Cys611. Residue Asn620 is glycosylated (N-linked (GlcNAc...) asparagine). 5 disulfides stabilise this stretch: Cys621–Cys658, Cys666–Cys673, Cys724–Cys753, Cys760–Cys807, and Cys816–Cys823. Asn740 carries an N-linked (GlcNAc...) asparagine glycan. The N-linked (GlcNAc...) asparagine glycan is linked to Asn864. Cystine bridges form between Cys868-Cys903, Cys886-Cys915, Cys927-Cys964, Cys970-Cys981, Cys1035-Cys1070, Cys1077-Cys1118, and Cys1127-Cys1135. Asn944 is a glycosylation site (N-linked (GlcNAc...) asparagine). An N-linked (GlcNAc...) asparagine glycan is attached at Asn1157. 4 cysteine pairs are disulfide-bonded: Cys1170/Cys1198, Cys1183/Cys1210, Cys1220/Cys1255, and Cys1263/Cys1275. Asn1239 is a glycosylation site (N-linked (GlcNAc...) asparagine). Residue Asn1305 is glycosylated (N-linked (GlcNAc...) asparagine). Intrachain disulfides connect Cys1312-Cys1342 and Cys1326-Cys1354. Asn1358 is a glycosylation site (N-linked (GlcNAc...) asparagine). 6 consecutive MRH domains span residues 1360 to 1501 (TECS…ACPV), 1507 to 1641 (DDCQ…ACEQ), 1643 to 1790 (TECT…VCPD), 1795 to 1982 (QGCA…VCPP), 1985 to 2120 (MECK…ACAV), and 2128 to 2273 (VNGT…VCPL). 2 disulfide bridges follow: Cys1362/Cys1401 and Cys1413/Cys1420. Residue Asn1423 is glycosylated (N-linked (GlcNAc...) asparagine). Disulfide bonds link Cys1454-Cys1487, Cys1469-Cys1499, Cys1509-Cys1546, Cys1552-Cys1559, Cys1591-Cys1627, Cys1607-Cys1639, Cys1645-Cys1688, Cys1699-Cys1706, Cys1743-Cys1776, Cys1759-Cys1788, Cys1797-Cys1832, Cys1843-Cys1849, Cys1886-Cys1968, Cys1896-Cys1920, Cys1910-Cys1935, Cys1950-Cys1980, Cys1987-Cys2022, Cys2032-Cys2039, Cys2075-Cys2106, and Cys2089-Cys2118. Residue Asn1532 is glycosylated (N-linked (GlcNAc...) asparagine). The N-linked (GlcNAc...) asparagine glycan is linked to Asn1649. Asn1750 carries N-linked (GlcNAc...) asparagine glycosylation. N-linked (GlcNAc...) asparagine glycosylation occurs at Asn1809. Residues 1891–1937 (DDGEPCVFPFIYKGKSYDECVLEGRAKLWCSKTANYDRDHEWGFCRQ) enclose the Fibronectin type-II domain. Asn2078 carries N-linked (GlcNAc...) asparagine glycosylation. Asn2129 carries an N-linked (GlcNAc...) asparagine glycan. Intrachain disulfides connect Cys2181/Cys2187, Cys2225/Cys2259, and Cys2241/Cys2271. Residues 2296-2316 (VGAVLSLLLVALTGCLLALLL) traverse the membrane as a helical segment. At 2317–2483 (HKKERRETVI…DDSDEDLLHI (167 aa)) the chain is on the cytoplasmic side. The residue at position 2342 (Lys2342) is an N6-acetyllysine. Position 2401 is a phosphoserine (Ser2401). Positions 2415 to 2483 (SGRGAEVESS…DDSDEDLLHI (69 aa)) are disordered. Arg2417 is subject to Omega-N-methylarginine. Composition is skewed to basic and acidic residues over residues 2434–2451 (VLKEREGERLGLVRGEKA) and 2471–2483 (SFHDDSDEDLLHI). 2 positions are modified to phosphoserine: Ser2471 and Ser2476.

The protein belongs to the MRL1/IGF2R family. In terms of assembly, binds HA-I and HA-II plasma membrane adapters. Interacts with DPP4; the interaction is direct. Binds GGA1, GGA2 and GGA3. Interacts with the heterotrimeric retromer cargo-selective complex (CSC), formed by VPS26 (VPS26A or VPS26B), VPS29 and VPS35; which is involved in retrograde trafficking of the receptor from endosomes to the Golgi apparatus. Palmitoylated. Undergoes cysteine S-palmitoylation which promotes interaction with the retromer cargo-selective complex which mediates its retrograde trafficking to the Golgi apparatus.

It localises to the golgi apparatus membrane. It is found in the endosome membrane. Its function is as follows. Mediates the transport of phosphorylated lysosomal enzymes from the Golgi complex and the cell surface to lysosomes. Lysosomal enzymes bearing phosphomannosyl residues bind specifically to mannose-6-phosphate receptors in the Golgi apparatus and the resulting receptor-ligand complex is transported to an acidic prelysosomal compartment where the low pH mediates the dissociation of the complex. The receptor is then recycled back to the Golgi for another round of trafficking through its binding to the retromer. This receptor also binds IGF2. Acts as a positive regulator of T-cell coactivation by binding DPP4. This Mus musculus (Mouse) protein is Cation-independent mannose-6-phosphate receptor (Igf2r).